A 961-amino-acid chain; its full sequence is MAERGGAGGGPGGAGGGSSQRGSGVAQSPQQQPPQQPSQPQQPTPPKLAQATSSSSSTSAAAASSSSSSTSTSMAVAVASGSAPPGGPGPGRTPAPVQMNLYATWEVDRSSSSCVPRLFSLTLKKLVMLKEMDKDLNSVVIAVKLQGSKRILRSNEIILPASGLVETELQLTFSLQYPHFLKRDANKLQIMLQRRKRYKNRTILGYKTLAVGLINMAEVMQHPNEGALVLGLHSNVKDVSVPVAEIKIYSLSSQPIDHEGIKSKLSDRSPDIDNYSEEEEESFSSEQEGSDDPLHGQDLFYEDEDLRKVKKTRRKLTSTSAITRQPNIKQKFVALLKRFKVSDEVGFGLEHVSREQIREVEEDLDELYDSLEMYNPSDSGPEMEETESILSTPKPKLKPFFEGMSQSSSQTEIGSLNSKGSLGKDTTSPMELAALEKVKSTWIKNQDDSLTETDTLEITDQDMFGDASTSLVVPEKVKTPMKSSKADLQGSASPSKVEGTHTPRQKRSTPLKERQLSKPLSERTNSSDSERSPDLGHSTQIPRKVVYDQLNQILVSDAALPENVILVNTTDWQGQYVAELLQDQRKPVVCTCSTVEVQAVLSALLTRIQRYCNCNSSMPRPVKVAAVGSQSYLSSILRFFVKSLASKTPDWLGHMRFLIVPLGSHPVAKYLGSVDSRYSSTFLDSAWRDLFSRSEPPVSEPLDVVGRVMQYVNGATTTHQLPVAEAMLTCRHKFPDEDSYQKFIPFIGVVKVGLVEDSPSTAGDGDDSPVVSLTVPSTSPPSSSGLSRDATATPPSSPSMSSALAIVGSPNSPYGDVIGLQVDYWLGHPGERRREGDKRDASSKNTLKSVFRSVQVSRLPHAGEAQLSGTMAMTVVTKEKNKKVPTIFLSKKPREKEVDSKSQVIEGISRLICSAKQQQTMLRVSIDGVEWSDIKFFQLAAQWPTHVKHFPVGLFSGSKPT.

The segment covering methionine 1–serine 19 has biased composition (gly residues). 2 disordered regions span residues methionine 1–threonine 70 and valine 76–alanine 95. Alanine 2 bears the N-acetylalanine mark. The segment covering glutamine 20–glutamine 30 has biased composition (low complexity). The residue at position 28 (serine 28) is a Phosphoserine. Residues glutamine 31 to proline 46 are compositionally biased toward pro residues. The residue at position 44 (threonine 44) is a Phosphothreonine. The span at alanine 51 to threonine 70 shows a compositional bias: low complexity. Tyrosine 249 is modified (phosphotyrosine). Over residues glycine 260–aspartate 271 the composition is skewed to basic and acidic residues. 2 disordered regions span residues glycine 260–glutamine 297 and asparagine 375–threonine 426. A compositionally biased stretch (acidic residues) spans asparagine 274–aspartate 291. A coiled-coil region spans residues histidine 351–asparagine 375. Phosphoserine occurs at positions 377 and 379. Residues methionine 404–threonine 426 show a composition bias toward polar residues. 2 positions are modified to phosphoserine: serine 428 and serine 493. Disordered stretches follow at residues glutamate 475 to glutamine 540 and serine 758 to serine 802. Position 502 is a phosphothreonine (threonine 502). A phosphoserine mark is found at serine 517, serine 526, serine 527, serine 529, and serine 532. Positions serine 768 to serine 802 are enriched in low complexity.

This sequence belongs to the PACS family. As to quaternary structure, associates with AP-1 and AP-3 but not with AP-2 complexes. Interacts with FURIN. Forms a ternary complex with furin and AP-1. Interacts with PKD2 (via acidic region). Interacts with SORL1. Interacts with WDR37.

It is found in the golgi apparatus. Its subcellular location is the trans-Golgi network. Coat protein that is involved in the localization of trans-Golgi network (TGN) membrane proteins that contain acidic cluster sorting motifs. Controls the endosome-to-Golgi trafficking of furin and mannose-6-phosphate receptor by connecting the acidic-cluster-containing cytoplasmic domain of these molecules with the adapter-protein complex-1 (AP-1) of endosomal clathrin-coated membrane pits. Required for normal ER Ca2+ handling in lymphocytes. Together with WDR37, it plays an essential role in lymphocyte development, quiescence and survival. Required for stabilizing peripheral lymphocyte populations. This chain is Phosphofurin acidic cluster sorting protein 1 (Pacs1), found in Rattus norvegicus (Rat).